We begin with the raw amino-acid sequence, 64 residues long: Small ribosomal subunit protein bS21 (64 aa).

This sequence belongs to the bacterial ribosomal protein bS21 family.

The chain is Small ribosomal subunit protein bS21 from Pelagibacter ubique (strain HTCC1062).